The chain runs to 245 residues: Carbohydrate deacetylase (245 aa).

The Mg(2+) site is built by histidine 59 and histidine 125.

It belongs to the YdjC deacetylase family. In terms of assembly, homodimer. Mg(2+) is required as a cofactor.

Functionally, probably catalyzes the deacetylation of acetylated carbohydrates an important step in the degradation of oligosaccharides. In Listeria monocytogenes serotype 4b (strain CLIP80459), this protein is Carbohydrate deacetylase.